The chain runs to 614 residues: Dihydroxy-acid dehydratase (614 aa).

Mg(2+) is bound at residue Asp81. Cys122 is a binding site for [2Fe-2S] cluster. Residues Asp123 and Lys124 each coordinate Mg(2+). Lys124 bears the N6-carboxylysine mark. Cys195 contacts [2Fe-2S] cluster. Glu491 serves as a coordination point for Mg(2+). Ser517 functions as the Proton acceptor in the catalytic mechanism.

This sequence belongs to the IlvD/Edd family. Homodimer. [2Fe-2S] cluster is required as a cofactor. Requires Mg(2+) as cofactor.

It catalyses the reaction (2R)-2,3-dihydroxy-3-methylbutanoate = 3-methyl-2-oxobutanoate + H2O. The enzyme catalyses (2R,3R)-2,3-dihydroxy-3-methylpentanoate = (S)-3-methyl-2-oxopentanoate + H2O. It functions in the pathway amino-acid biosynthesis; L-isoleucine biosynthesis; L-isoleucine from 2-oxobutanoate: step 3/4. Its pathway is amino-acid biosynthesis; L-valine biosynthesis; L-valine from pyruvate: step 3/4. Its function is as follows. Functions in the biosynthesis of branched-chain amino acids. Catalyzes the dehydration of (2R,3R)-2,3-dihydroxy-3-methylpentanoate (2,3-dihydroxy-3-methylvalerate) into 2-oxo-3-methylpentanoate (2-oxo-3-methylvalerate) and of (2R)-2,3-dihydroxy-3-methylbutanoate (2,3-dihydroxyisovalerate) into 2-oxo-3-methylbutanoate (2-oxoisovalerate), the penultimate precursor to L-isoleucine and L-valine, respectively. This Nitrobacter winogradskyi (strain ATCC 25391 / DSM 10237 / CIP 104748 / NCIMB 11846 / Nb-255) protein is Dihydroxy-acid dehydratase.